Consider the following 209-residue polypeptide: MSAKKRTASSARWMQEHFDDHYVKLAQKRGLRSRAAFKLEEIQQKDHLIRQGMTVVDLGAAPGGWSQVAVKLAGDNGKVIACDILPMDPIVGVDFLQGDFREENVLNALLDRVGEDKVDVVLSDMAPNMSGSDGVDQPRAMYLVELALEMCHQVLAPNGCFAVKVFQGEGFDEYIKSVKQAFKTVKTRKPDSSRARSREVYLVATGYKL.

Residues glycine 63, tryptophan 65, aspartate 83, aspartate 99, and aspartate 124 each coordinate S-adenosyl-L-methionine. Lysine 164 acts as the Proton acceptor in catalysis.

The protein belongs to the class I-like SAM-binding methyltransferase superfamily. RNA methyltransferase RlmE family.

The protein localises to the cytoplasm. The enzyme catalyses uridine(2552) in 23S rRNA + S-adenosyl-L-methionine = 2'-O-methyluridine(2552) in 23S rRNA + S-adenosyl-L-homocysteine + H(+). Its function is as follows. Specifically methylates the uridine in position 2552 of 23S rRNA at the 2'-O position of the ribose in the fully assembled 50S ribosomal subunit. This Shewanella denitrificans (strain OS217 / ATCC BAA-1090 / DSM 15013) protein is Ribosomal RNA large subunit methyltransferase E.